Here is a 222-residue protein sequence, read N- to C-terminus: Thymidylate kinase (222 aa).

ATP-binding positions include 29-34 (RVGKST) and Arg111. The tract at residues 146–170 (LSMSSEDATKRGEYGGERYEKLEFQ) is LID.

It belongs to the thymidylate kinase family. As to quaternary structure, homodimer. It depends on Mg(2+) as a cofactor.

The enzyme catalyses dTMP + ATP = dTDP + ADP. The protein operates within pyrimidine metabolism; dTTP biosynthesis. In terms of biological role, catalyzes the phosphorylation of thymidine monophosphate (dTMP) to thymidine diphosphate (dTDP), the immediate precursor for the DNA building block dTTP, with ATP as the preferred phosphoryl donor in the presence of Mg(2+). The polypeptide is Thymidylate kinase (dtymk) (Dictyostelium discoideum (Social amoeba)).